The primary structure comprises 576 residues: Proline--tRNA ligase (576 aa).

It belongs to the class-II aminoacyl-tRNA synthetase family. ProS type 1 subfamily. As to quaternary structure, homodimer.

The protein localises to the cytoplasm. The enzyme catalyses tRNA(Pro) + L-proline + ATP = L-prolyl-tRNA(Pro) + AMP + diphosphate. Functionally, catalyzes the attachment of proline to tRNA(Pro) in a two-step reaction: proline is first activated by ATP to form Pro-AMP and then transferred to the acceptor end of tRNA(Pro). As ProRS can inadvertently accommodate and process non-cognate amino acids such as alanine and cysteine, to avoid such errors it has two additional distinct editing activities against alanine. One activity is designated as 'pretransfer' editing and involves the tRNA(Pro)-independent hydrolysis of activated Ala-AMP. The other activity is designated 'posttransfer' editing and involves deacylation of mischarged Ala-tRNA(Pro). The misacylated Cys-tRNA(Pro) is not edited by ProRS. The protein is Proline--tRNA ligase of Dechloromonas aromatica (strain RCB).